The following is a 405-amino-acid chain: Transposase from transposon Tn916 (405 aa).

A Core-binding (CB) domain is found at 79-163 (GKKMTLCQLY…SLKASFYIAI (85 aa)). Residues 186–392 (VPKTVLTEEQ…TFDSAMAEMK (207 aa)) form the Tyr recombinase domain. Catalysis depends on residues arginine 225, lysine 264, histidine 343, arginine 346, and histidine 369. Catalysis depends on tyrosine 379, which acts as the O-(3'-phospho-DNA)-tyrosine intermediate.

This sequence belongs to the 'phage' integrase family.

This chain is Transposase from transposon Tn916 (Int-Tn), found in Enterococcus faecalis (Streptococcus faecalis).